Consider the following 81-residue polypeptide: Large ribosomal subunit protein bL31B (81 aa).

It belongs to the bacterial ribosomal protein bL31 family. Type B subfamily. In terms of assembly, part of the 50S ribosomal subunit.

In Borreliella burgdorferi (strain ATCC 35210 / DSM 4680 / CIP 102532 / B31) (Borrelia burgdorferi), this protein is Large ribosomal subunit protein bL31B.